A 405-amino-acid polypeptide reads, in one-letter code: L-rhamnonate dehydratase (405 aa).

Substrate contacts are provided by histidine 33 and arginine 59. Mg(2+) is bound by residues aspartate 226, glutamate 252, and glutamate 280. Histidine 329 (proton acceptor) is an active-site residue. Substrate is bound at residue glutamate 349.

This sequence belongs to the mandelate racemase/muconate lactonizing enzyme family. RhamD subfamily. In terms of assembly, homooctamer; tetramer of dimers. The cofactor is Mg(2+).

It carries out the reaction L-rhamnonate = 2-dehydro-3-deoxy-L-rhamnonate + H2O. In terms of biological role, catalyzes the dehydration of L-rhamnonate to 2-keto-3-deoxy-L-rhamnonate (KDR). This chain is L-rhamnonate dehydratase, found in Escherichia coli (strain K12 / DH10B).